The chain runs to 257 residues: Acetylglutamate kinase (257 aa).

Residues 43-44 (GG), Arg65, and Asn157 each bind substrate. Residues 180 to 185 (DISSIL) and 208 to 210 (IIT) each bind ATP.

The protein belongs to the acetylglutamate kinase family. ArgB subfamily. As to quaternary structure, homodimer.

It localises to the cytoplasm. The enzyme catalyses N-acetyl-L-glutamate + ATP = N-acetyl-L-glutamyl 5-phosphate + ADP. It participates in amino-acid biosynthesis; L-arginine biosynthesis; N(2)-acetyl-L-ornithine from L-glutamate: step 2/4. Its function is as follows. Catalyzes the ATP-dependent phosphorylation of N-acetyl-L-glutamate. The polypeptide is Acetylglutamate kinase (Buchnera aphidicola subsp. Acyrthosiphon pisum (strain Tuc7)).